We begin with the raw amino-acid sequence, 396 residues long: Elongation factor Tu (396 aa).

In terms of domain architecture, tr-type G spans 10-205; the sequence is KSHANIGTIG…AVDEYIPTPE (196 aa). The tract at residues 19–26 is G1; it reads GHVDHGKT. GTP is bound at residue 19–26; sequence GHVDHGKT. Position 26 (Thr-26) interacts with Mg(2+). Residues 61-65 are G2; it reads GITIS. Positions 82 to 85 are G3; sequence DCPG. GTP contacts are provided by residues 82–86 and 137–140; these read DCPGH and NKCD. A G4 region spans residues 137–140; that stretch reads NKCD. Positions 175–177 are G5; the sequence is SAL. Phosphothreonine is present on Thr-385.

Belongs to the TRAFAC class translation factor GTPase superfamily. Classic translation factor GTPase family. EF-Tu/EF-1A subfamily. In terms of assembly, monomer. Interacts with BrxC. Phosphorylated on Thr-385 in vitro by PrkC in the presence of poly-L-lysine or myelin basic protein, dephosphorylated by PrpC.

The protein resides in the cytoplasm. The catalysed reaction is GTP + H2O = GDP + phosphate + H(+). In terms of biological role, GTP hydrolase that promotes the GTP-dependent binding of aminoacyl-tRNA to the A-site of ribosomes during protein biosynthesis. The protein is Elongation factor Tu of Bacillus subtilis (strain 168).